The primary structure comprises 135 residues: MSGHTSFYCGLLLLLLIQVQARPRADDSLQVLSRLLEDEYGHFNSEELNNEAQEISPAASLPDLNTDQSDLELPWDRESREIGGRSFRQEALLARLLQDLSNNPLRFKGRSKKGPSRSCFGLKLDRIGAMSGLGC.

A signal peptide spans 1–25 (MSGHTSFYCGLLLLLLIQVQARPRA). Residues 26–113 (DDSLQVLSRL…PLRFKGRSKK (88 aa)) constitute a propeptide that is removed on maturation. The segment at 46 to 67 (EELNNEAQEISPAASLPDLNTD) is disordered. Cys-119 and Cys-135 form a disulfide bridge.

The protein belongs to the natriuretic peptide family.

The protein localises to the secreted. In terms of biological role, hormone which may be vasoactive and natriuretic. Has a cGMP-stimulating activity. The protein is C-type natriuretic peptide of Squalus acanthias (Spiny dogfish).